A 128-amino-acid chain; its full sequence is Large ribosomal subunit protein bL19 (128 aa).

This sequence belongs to the bacterial ribosomal protein bL19 family.

This protein is located at the 30S-50S ribosomal subunit interface and may play a role in the structure and function of the aminoacyl-tRNA binding site. The sequence is that of Large ribosomal subunit protein bL19 from Aromatoleum aromaticum (strain DSM 19018 / LMG 30748 / EbN1) (Azoarcus sp. (strain EbN1)).